The chain runs to 206 residues: GTP cyclohydrolase 1 (206 aa).

C95, H98, and C166 together coordinate Zn(2+).

Belongs to the GTP cyclohydrolase I family. In terms of assembly, toroid-shaped homodecamer, composed of two pentamers of five dimers.

The catalysed reaction is GTP + H2O = 7,8-dihydroneopterin 3'-triphosphate + formate + H(+). It participates in cofactor biosynthesis; 7,8-dihydroneopterin triphosphate biosynthesis; 7,8-dihydroneopterin triphosphate from GTP: step 1/1. The protein is GTP cyclohydrolase 1 of Bartonella bacilliformis (strain ATCC 35685 / KC583 / Herrer 020/F12,63).